The sequence spans 68 residues: uncharacterized protein (68 aa).

This is an uncharacterized protein from Saccharomyces cerevisiae (strain ATCC 204508 / S288c) (Baker's yeast).